The primary structure comprises 74 residues: Exodeoxyribonuclease 7 small subunit (74 aa).

This sequence belongs to the XseB family. In terms of assembly, heterooligomer composed of large and small subunits.

The protein resides in the cytoplasm. It catalyses the reaction Exonucleolytic cleavage in either 5'- to 3'- or 3'- to 5'-direction to yield nucleoside 5'-phosphates.. Bidirectionally degrades single-stranded DNA into large acid-insoluble oligonucleotides, which are then degraded further into small acid-soluble oligonucleotides. This Neisseria gonorrhoeae (strain ATCC 700825 / FA 1090) protein is Exodeoxyribonuclease 7 small subunit.